An 881-amino-acid polypeptide reads, in one-letter code: Band 4.1-like protein 1 (881 aa).

At Met1 the chain carries N-acetylmethionine. The segment at 1–88 is disordered; that stretch reads MTTETGPDSE…TPSKAQKSPQ (88 aa). Residues 17–35 are compositionally biased toward low complexity; it reads EAPQQPEAAAAVTTPVTPA. Thr30 carries the post-translational modification Phosphothreonine. Positions 38–50 are enriched in basic and acidic residues; that stretch reads GHPEANSNEKHPS. A Phosphoserine modification is found at Ser75. Residues 76 to 87 are compositionally biased toward polar residues; it reads ERTTPSKAQKSP. Thr79 carries the post-translational modification Phosphothreonine. One can recognise an FERM domain in the interval 97–378; that stretch reads AICRVTLLDA…EHHTFFRLVS (282 aa). Tyr343 carries the post-translational modification Phosphotyrosine. 3 positions are modified to phosphoserine: Ser378, Ser430, and Ser437. The segment at 428-501 is disordered; sequence SRSLDGAEFS…HKQEFLDKPE (74 aa). Residues 444-457 show a composition bias toward basic and acidic residues; it reads ENHDAGPDGDKRDE. A phosphoserine mark is found at Ser461 and Ser466. Over residues 466 to 501 the composition is skewed to basic and acidic residues; sequence SEAEEGEVRTPTKIKELKPEQETTPRHKQEFLDKPE. Residue Thr475 is modified to Phosphothreonine. The segment at 483 to 541 is spectrin--actin-binding; the sequence is KPEQETTPRHKQEFLDKPEDVLLKHQASINELKRTLKEPNSKLIHRDRDWERERRLPSS. Phosphoserine is present on Ser510. The segment covering 514-538 has biased composition (basic and acidic residues); it reads LKRTLKEPNSKLIHRDRDWERERRL. A disordered region spans residues 514-596; the sequence is LKRTLKEPNS…QERDTVFLKD (83 aa). Ser540, Ser541, Ser544, and Ser546 each carry phosphoserine. Position 550 is a phosphothreonine (Thr550). The segment covering 550-577 has biased composition (basic and acidic residues); that stretch reads TPEKANERAGLREGSEEKVKPPRPRAPE. Phosphoserine occurs at positions 564 and 578. The residue at position 580 (Thr580) is a Phosphothreonine. Residues Ser639, Ser648, Ser650, Ser667, Ser672, Ser678, and Ser685 each carry the phosphoserine modification. The tract at residues 642 to 699 is disordered; sequence ELDRDKSDSDTEGLLFSRDLNKGAPSQDDESGGIEDSPDRGACSTPDMPQFEPVKTET. Phosphothreonine is present on Thr686. Phosphoserine is present on residues Ser722, Ser784, and Ser870. The tract at residues 746–881 is C-terminal (CTD); the sequence is SITTETISTT…EERDKKPQES (136 aa).

In terms of assembly, interacts with AGAP2. As to expression, highest expression in brain, lower in heart, kidney, pancreas, placenta, lung and skeletal muscle.

It is found in the cytoplasm. The protein localises to the cytoskeleton. Its function is as follows. May function to confer stability and plasticity to neuronal membrane via multiple interactions, including the spectrin-actin-based cytoskeleton, integral membrane channels and membrane-associated guanylate kinases. This is Band 4.1-like protein 1 from Homo sapiens (Human).